The sequence spans 516 residues: Cysteine--tRNA ligase (516 aa).

C32 serves as a coordination point for Zn(2+). A 'HIGH' region motif is present at residues 34-44 (PTVYMYAHIGN). The Zn(2+) site is built by C230, H255, and E259. A 'KMSKS' region motif is present at residues 287 to 291 (KMSKS). K290 is a binding site for ATP.

It belongs to the class-I aminoacyl-tRNA synthetase family. As to quaternary structure, monomer. It depends on Zn(2+) as a cofactor.

The protein resides in the cytoplasm. The catalysed reaction is tRNA(Cys) + L-cysteine + ATP = L-cysteinyl-tRNA(Cys) + AMP + diphosphate. This chain is Cysteine--tRNA ligase, found in Salinibacter ruber (strain DSM 13855 / M31).